A 220-amino-acid chain; its full sequence is Ribosomal RNA large subunit methyltransferase E (220 aa).

G60, W62, D92, D108, and D133 together coordinate S-adenosyl-L-methionine. K173 functions as the Proton acceptor in the catalytic mechanism. Residues 195–220 (APRKPKASRDKSSETFILGRHLKRPR) are disordered.

It belongs to the class I-like SAM-binding methyltransferase superfamily. RNA methyltransferase RlmE family.

The protein resides in the cytoplasm. It catalyses the reaction uridine(2552) in 23S rRNA + S-adenosyl-L-methionine = 2'-O-methyluridine(2552) in 23S rRNA + S-adenosyl-L-homocysteine + H(+). Its function is as follows. Specifically methylates the uridine in position 2552 of 23S rRNA at the 2'-O position of the ribose in the fully assembled 50S ribosomal subunit. The sequence is that of Ribosomal RNA large subunit methyltransferase E from Burkholderia lata (strain ATCC 17760 / DSM 23089 / LMG 22485 / NCIMB 9086 / R18194 / 383).